Here is a 244-residue protein sequence, read N- to C-terminus: Homeobox-leucine zipper protein HOX14 (244 aa).

A disordered region spans residues 25–64 (ASGEVQGERPRARRRRRRGARCVGGGGGGGEVDGGDPKKR). Over residues 35–44 (RARRRRRRGA) the composition is skewed to basic residues. A compositionally biased stretch (gly residues) spans 46–56 (CVGGGGGGGEV). Residues 59–118 (GDPKKRRLSDEQVEMLELSFREERKLETGRKVHLASELGLDPKQVAVWFQNRRARHKSKL) constitute a DNA-binding region (homeobox). The stretch at 108–167 (QNRRARHKSKLLEEEFSKLKHAHDAAILHKCHLENEVLRLKERLVVAEEEVRRLRSAAGS) forms a coiled coil.

This sequence belongs to the HD-ZIP homeobox family. Class I subfamily. In terms of tissue distribution, expressed in roots, stems, leaf blades and panicles.

Its subcellular location is the nucleus. Its function is as follows. Probable transcription factor. The sequence is that of Homeobox-leucine zipper protein HOX14 (HOX14) from Oryza sativa subsp. indica (Rice).